Reading from the N-terminus, the 355-residue chain is Mitogen-activated protein kinase (355 aa).

Residues Tyr23–Leu311 form the Protein kinase domain. ATP contacts are provided by residues Val29–Val37 and Lys52. Residue Asp147 is the Proton acceptor of the active site. Residue Thr183 is modified to Phosphothreonine. The TXY motif lies at Thr183–Tyr185. Tyr185 is modified (phosphotyrosine).

Belongs to the protein kinase superfamily. CMGC Ser/Thr protein kinase family. MAP kinase subfamily. Dually phosphorylated on Thr-183 and Tyr-185, which activates the enzyme.

The protein resides in the nucleus. The enzyme catalyses L-seryl-[protein] + ATP = O-phospho-L-seryl-[protein] + ADP + H(+). The catalysed reaction is L-threonyl-[protein] + ATP = O-phospho-L-threonyl-[protein] + ADP + H(+). Activated by tyrosine and threonine phosphorylation. Its function is as follows. Responds to activation by environmental stress by phosphorylating downstream targets. This Fusarium vanettenii (Neocosmospora pisi) protein is Mitogen-activated protein kinase (MAPK).